The following is a 367-amino-acid chain: Cyclin-D3-2 (367 aa).

Over residues 324–335 the composition is skewed to low complexity; it reads STTASVSSSSSS. The interval 324-347 is disordered; sequence STTASVSSSSSSPEPLLKRRRVQE.

It belongs to the cyclin family. Cyclin D subfamily. In terms of assembly, interacts with CDKA-1. As to expression, expressed in developing vegetative and floral primordia.

Functionally, promotes divisions in the guard cells (GCs) after the guard mother cells (GMC) symmetric division when in the presence of CDKA-1. This chain is Cyclin-D3-2 (CYCD3-2), found in Arabidopsis thaliana (Mouse-ear cress).